Here is a 152-residue protein sequence, read N- to C-terminus: Small ribosomal subunit protein uS13 (152 aa).

The protein belongs to the universal ribosomal protein uS13 family. In terms of assembly, part of the 30S ribosomal subunit. Forms a loose heterodimer with protein S19. Forms two bridges to the 50S subunit in the 70S ribosome.

Located at the top of the head of the 30S subunit, it contacts several helices of the 16S rRNA. In the 70S ribosome it contacts the 23S rRNA (bridge B1a) and protein L5 of the 50S subunit (bridge B1b), connecting the 2 subunits; these bridges are implicated in subunit movement. The protein is Small ribosomal subunit protein uS13 of Pyrobaculum aerophilum (strain ATCC 51768 / DSM 7523 / JCM 9630 / CIP 104966 / NBRC 100827 / IM2).